The primary structure comprises 448 residues: MKSLSLLLAVALGLATAVSAGPAVIECWFVEDTSGKGLAKRPGALLLRQGQGEPPPRPDLDPELYLNVHDPTGFLQAAFRRYPRDAPAPHCEMSRFVPLPASANWASGLTPARNCPRALDGAWLMVSMSSPVLSLSSLLRPQPEPQQEPVLITMATVVLTVLTHTPAPRVRLGQDALLDLSFAYMPPTSEAASSLAAGPPPFGLEWRRQHLGKGHLLLAATPGLNGQMPAAQEGAVAFAAWDDDEPWGPWTGNGTFWLPRVQPFQEGTYLATIHLPYLQGQVTLELAVYKPPKVSLMPATLAWAAPGEAPPELLCLVSHFYPPGGLEVEWELRGGPGGRSQKAEGQRWLSALRHHSDGSVSLSGHLQPPPVTTEQHGARYACRIHHPSLPASGRSAEVTLEVAGLSGPSLEDSIGLFLSAFFLLGLFKALGWAAVYLSTCKDSKKKAE.

The N-terminal stretch at 1–20 (MKSLSLLLAVALGLATAVSA) is a signal peptide. Residues 21 to 414 (GPAVIECWFV…LSGPSLEDSI (394 aa)) lie on the Lumenal side of the membrane. Cys-27 and Cys-91 are joined by a disulfide. Asn-253 is a glycosylation site (N-linked (GlcNAc...) asparagine). The Ig-like C1-type domain maps to 292 to 399 (PKVSLMPATL…PASGRSAEVT (108 aa)). A disulfide bond links Cys-315 and Cys-382. A helical membrane pass occupies residues 415–435 (GLFLSAFFLLGLFKALGWAAV). The Cytoplasmic segment spans residues 436 to 448 (YLSTCKDSKKKAE).

In terms of assembly, heterodimer with PDIA3; disulfide-linked. Obligatory mediator for the interaction between newly assembled MHC class I molecules, calreticulin, PDIA3 and TAP. Up to 4 MHC class I/tapasin complexes bind to 1 TAP. Interacts with HLA-G-B2M complex; this interaction is required for loading of high affinity peptides. On its own or as part of MHC class I peptide loading complex, interacts with ligand-free MR1 or MR1-B2M complex, providing for stable MR1 pools ready for metabolite antigen processing.

It is found in the endoplasmic reticulum membrane. In terms of biological role, involved in the association of MHC class I with transporter associated with antigen processing (TAP) and in the assembly of MHC class I with peptide (peptide loading). The protein is Tapasin (TAPBP) of Chlorocebus aethiops (Green monkey).